The sequence spans 105 residues: Toxin ParE2 (105 aa).

Belongs to the RelE toxin family.

In terms of biological role, toxic component of a type II toxin-antitoxin (TA) system. Its toxic effect is neutralized by coexpression with cognate antitoxin ParD2. This is Toxin ParE2 (parE2) from Mycobacterium tuberculosis (strain CDC 1551 / Oshkosh).